Reading from the N-terminus, the 484-residue chain is L-carnitine dehydrogenase/betainyl-CoA thioesterase (484 aa).

The segment at 1–322 is L-carnitine dehydrogenase; that stretch reads MKIAAIGGGV…ENRFYARNGK (322 aa). 7-12 contacts NAD(+); it reads GGGVIG. A betainyl-CoA thioesterase region spans residues 323–484; sequence VQADYPLRLH…RAVRLKETSA (162 aa).

This sequence in the N-terminal section; belongs to the 3-hydroxyacyl-CoA dehydrogenase family. L-carnitine dehydrogenase subfamily. In the C-terminal section; belongs to the betainyl-CoA thioesterase family. As to quaternary structure, homodimer.

The protein resides in the cytoplasm. The catalysed reaction is carnitine + NAD(+) = 3-dehydrocarnitine + NADH + H(+). It catalyses the reaction N,N,N-trimethylglycyl-CoA + H2O = glycine betaine + CoA + H(+). Its pathway is amine and polyamine metabolism; carnitine metabolism. Functionally, multifunctional enzyme that catalyzes the NAD(+)-dependent oxidation of L-carnitine to 3-dehydrocarnitine and the cleavage of betainyl-CoA (N,N,N-trimethylglycyl-CoA) into glycine betaine and coenzyme A. The polypeptide is L-carnitine dehydrogenase/betainyl-CoA thioesterase (Agrobacterium fabrum (strain C58 / ATCC 33970) (Agrobacterium tumefaciens (strain C58))).